Consider the following 31-residue polypeptide: Cytochrome b6-f complex subunit 6 (31 aa).

The chain crosses the membrane as a helical span at residues 4 to 26; it reads IVSYFGFLLTASTITPALFIGLS.

This sequence belongs to the PetL family. As to quaternary structure, the 4 large subunits of the cytochrome b6-f complex are cytochrome b6, subunit IV (17 kDa polypeptide, PetD), cytochrome f and the Rieske protein, while the 4 small subunits are PetG, PetL, PetM and PetN. The complex functions as a dimer.

It localises to the plastid. Its subcellular location is the chloroplast thylakoid membrane. Component of the cytochrome b6-f complex, which mediates electron transfer between photosystem II (PSII) and photosystem I (PSI), cyclic electron flow around PSI, and state transitions. PetL is important for photoautotrophic growth as well as for electron transfer efficiency and stability of the cytochrome b6-f complex. This chain is Cytochrome b6-f complex subunit 6, found in Nymphaea alba (White water-lily).